The sequence spans 304 residues: Mycothiol acetyltransferase (304 aa).

N-acetyltransferase domains lie at 16 to 155 and 164 to 304; these read AHVE…RTGL and VALS…YRRA. Residue Glu-46 coordinates 1D-myo-inositol 2-(L-cysteinylamino)-2-deoxy-alpha-D-glucopyranoside. Residue 87-89 participates in acetyl-CoA binding; that stretch reads LVV. Residues Glu-190, Lys-230, and Glu-237 each contribute to the 1D-myo-inositol 2-(L-cysteinylamino)-2-deoxy-alpha-D-glucopyranoside site. Residues 241–243 and 248–254 each bind acetyl-CoA; these read LGV and AARGLGS. Tyr-275 contacts 1D-myo-inositol 2-(L-cysteinylamino)-2-deoxy-alpha-D-glucopyranoside.

It belongs to the acetyltransferase family. MshD subfamily. As to quaternary structure, monomer.

The catalysed reaction is 1D-myo-inositol 2-(L-cysteinylamino)-2-deoxy-alpha-D-glucopyranoside + acetyl-CoA = mycothiol + CoA + H(+). Functionally, catalyzes the transfer of acetyl from acetyl-CoA to desacetylmycothiol (Cys-GlcN-Ins) to form mycothiol. The chain is Mycothiol acetyltransferase from Clavibacter sepedonicus (Clavibacter michiganensis subsp. sepedonicus).